Here is a 661-residue protein sequence, read N- to C-terminus: PAN2-PAN3 deadenylation complex subunit pan3 (661 aa).

2 disordered regions span residues 1–29 (MASV…NAKD) and 53–131 (DPHK…RQDA). The C3H1-type zinc finger occupies 26–55 (NAKDTLCRNVTIYGRCRYEDKGCAFNHDPH). The short motif at 63–83 (NASKKRFNVDSPSFTPSLLPS) is the PABPC-interacting motif-2 (PAM-2) element. The segment covering 77–104 (TPSLLPSNGSSPTSSSSSLKKSSTISPK) has biased composition (low complexity). Positions 115-126 (TAASRSNTSTPG) are enriched in polar residues. The segment at 263 to 524 (QTLPNTQLPA…NIDILINGIS (262 aa)) is pseudokinase domain. ATP-binding positions include arginine 315, 364–371 (DYHPLSKT), and 424–425 (SK). The stretch at 525-563 (SQLMSTFDSALHLDDQLTSDLGRELENGRLVRLLTKLNF) forms a coiled coil. Residues 564 to 661 (INERPEHEHD…ALLRPSRRPH (98 aa)) are knob domain.

The protein belongs to the protein kinase superfamily. PAN3 family. Homodimer. Forms a heterotrimer with a catalytic subunit pan2 to form the poly(a)-nuclease (PAN) deadenylation complex. Interacts (via PAM-2 motif) with poly(A)-binding protein pab1 (via PABC domain), conferring substrate specificity of the enzyme complex.

It is found in the cytoplasm. Regulatory subunit of the poly(A)-nuclease (PAN) deadenylation complex, one of two cytoplasmic mRNA deadenylases involved in mRNA turnover. PAN specifically shortens poly(A) tails of RNA and the activity is stimulated by poly(A)-binding protein pab1. PAN deadenylation is followed by rapid degradation of the shortened mRNA tails by the CCR4-NOT complex. Deadenylated mRNAs are then degraded by two alternative mechanisms, namely exosome-mediated 3'-5' exonucleolytic degradation, or deadenylation-dependent mRNA decaping and subsequent 5'-3' exonucleolytic degradation by XRN1. May also be involved in post-transcriptional maturation of mRNA poly(A) tails. pan3 acts as a positive regulator for PAN activity, recruiting the catalytic subunit pan2 to mRNA via its interaction with RNA and with pab1. This is PAN2-PAN3 deadenylation complex subunit pan3 from Emericella nidulans (strain FGSC A4 / ATCC 38163 / CBS 112.46 / NRRL 194 / M139) (Aspergillus nidulans).